The following is a 253-amino-acid chain: REF/SRPP-like protein Os05g0151300/LOC_Os05g05940 (253 aa).

A disordered region spans residues 1 to 26 (MADSGSDAPISNRPEEEVTVEKTPEM). Positions 13–26 (RPEEEVTVEKTPEM) are enriched in basic and acidic residues.

The protein belongs to the REF/SRPP family.

In Oryza sativa subsp. japonica (Rice), this protein is REF/SRPP-like protein Os05g0151300/LOC_Os05g05940.